Consider the following 203-residue polypeptide: Protein S40-6 (203 aa).

A disordered region spans residues 1–33; sequence MAKGRKPTTMNRSDRYLGSYTYGDSHGNSVTDE.

Belongs to the senescence regulator S40 family.

The protein resides in the cytoplasm. The chain is Protein S40-6 from Arabidopsis thaliana (Mouse-ear cress).